Consider the following 404-residue polypeptide: Inosine-5'-monophosphate dehydrogenase (404 aa).

Residues D172 and 222–224 (GIG) contribute to the NAD(+) site. The K(+) site is built by G224 and G226. S227 provides a ligand contact to IMP. K(+) is bound at residue C229. The Thioimidate intermediate role is filled by C229. IMP contacts are provided by residues 262 to 264 (DGG), 285 to 286 (GN), and 309 to 313 (YVGMG). The active-site Proton acceptor is the R325. E340 serves as a coordination point for IMP. K(+) is bound by residues E394, S395, and H396.

It belongs to the IMPDH/GMPR family. As to quaternary structure, homotetramer. Requires K(+) as cofactor.

The catalysed reaction is IMP + NAD(+) + H2O = XMP + NADH + H(+). The protein operates within purine metabolism; XMP biosynthesis via de novo pathway; XMP from IMP: step 1/1. With respect to regulation, mycophenolic acid (MPA) is a non-competitive inhibitor that prevents formation of the closed enzyme conformation by binding to the same site as the amobile flap. In contrast, mizoribine monophosphate (MZP) is a competitive inhibitor that induces the closed conformation. MPA is a potent inhibitor of mammalian IMPDHs but a poor inhibitor of the bacterial enzymes. MZP is a more potent inhibitor of bacterial IMPDH. Functionally, catalyzes the conversion of inosine 5'-phosphate (IMP) to xanthosine 5'-phosphate (XMP), the first committed and rate-limiting step in the de novo synthesis of guanine nucleotides, and therefore plays an important role in the regulation of cell growth. Essential for mouse infection by tick bite and critical for the survival in environments that appear to lack sufficient amounts of guanine, guanosine, and/or deoxyguanosine to support spirochete growth, such as mammalian host tissues. This Borreliella burgdorferi (strain ATCC 35210 / DSM 4680 / CIP 102532 / B31) (Borrelia burgdorferi) protein is Inosine-5'-monophosphate dehydrogenase.